A 146-amino-acid polypeptide reads, in one-letter code: Bradykinin-like neuropeptide (146 aa).

Residues Met-1–Ser-24 form the signal peptide. 2 propeptides span residues Leu-25–Ala-80 and Leu-92–Gly-146.

Neuron L5.

Its subcellular location is the secreted. Functionally, may have important functions in renal physiology and in animal behavior, as does bradykinin. The polypeptide is Bradykinin-like neuropeptide (LUQ-1) (Aplysia californica (California sea hare)).